A 392-amino-acid polypeptide reads, in one-letter code: MFGTATRPGATRALLLGSGELGKEVAIELQRFGIEVIAADRYADAPAMQVAHKAHVLDMLDGAALRALVNEVKPDLIIPELEAIATDTLAALEQEGVKVVPNARATQLTMNREGIRRLAAETLGLPTSPYHFAQSKEEFVAAVDTIGLPCVVKPVMSSSGKGQSVLRDLAKLDESWTHAQEGGRAGRGKVIVEGFVPFEYEITLLTVRAVDGIHFCQPIGHRQEDGDYRESWQPQAMSEQALARSKEVAAKVVEALGGYGLFGVELFIKGDEVWFSEVSPRPHDTGMVTLISQDLSEFALHVRAILGLPVGTITQYGPSASAVVLREGHSQDIRYQGIGEALALVPGAQLRLFGKPEIAGRRRLGVALARAEDCPTAVEQAKAVAARVDVLF.

N(1)-(5-phospho-beta-D-ribosyl)glycinamide is bound by residues 20 to 21 (EL) and Glu-80. ATP contacts are provided by residues Arg-112, Lys-153, 158 to 163 (SSGKGQ), 193 to 196 (EGFV), and Glu-201. The region spanning 117-306 (RLAAETLGLP…EFALHVRAIL (190 aa)) is the ATP-grasp domain. Mg(2+) is bound by residues Glu-265 and Glu-277. N(1)-(5-phospho-beta-D-ribosyl)glycinamide is bound by residues Asp-284, Lys-355, and 362 to 363 (RR).

Belongs to the PurK/PurT family. In terms of assembly, homodimer.

The catalysed reaction is N(1)-(5-phospho-beta-D-ribosyl)glycinamide + formate + ATP = N(2)-formyl-N(1)-(5-phospho-beta-D-ribosyl)glycinamide + ADP + phosphate + H(+). Its pathway is purine metabolism; IMP biosynthesis via de novo pathway; N(2)-formyl-N(1)-(5-phospho-D-ribosyl)glycinamide from N(1)-(5-phospho-D-ribosyl)glycinamide (formate route): step 1/1. Involved in the de novo purine biosynthesis. Catalyzes the transfer of formate to 5-phospho-ribosyl-glycinamide (GAR), producing 5-phospho-ribosyl-N-formylglycinamide (FGAR). Formate is provided by PurU via hydrolysis of 10-formyl-tetrahydrofolate. This Aeromonas hydrophila subsp. hydrophila (strain ATCC 7966 / DSM 30187 / BCRC 13018 / CCUG 14551 / JCM 1027 / KCTC 2358 / NCIMB 9240 / NCTC 8049) protein is Formate-dependent phosphoribosylglycinamide formyltransferase.